Consider the following 1017-residue polypeptide: Protein HIR2 (1017 aa).

WD repeat units follow at residues 10-49 (YHNG…ELSK), 74-117 (CHKS…QLFP), 124-163 (SEVN…FQEL), 167-208 (CHEK…DDTS), 228-271 (PLNV…TNIE), 275-326 (GHDF…PITV), and 330-371 (AVQG…YTFS). Residues 417-561 (ISTTTSSSNT…APSDLPRSNS (145 aa)) form a disordered region. The segment covering 473–483 (LDDDIDGDGDD) has biased composition (acidic residues). 2 stretches are compositionally biased toward polar residues: residues 518-535 (SDST…VTTK) and 545-561 (LISS…RSNS).

The protein belongs to the WD repeat HIR1 family.

Its subcellular location is the nucleus. Required for replication-independent chromatin assembly and for the periodic repression of histone gene transcription during the cell cycle. This is Protein HIR2 (HIR2) from Candida albicans (strain SC5314 / ATCC MYA-2876) (Yeast).